The sequence spans 518 residues: Vesicular inhibitory amino acid transporter (518 aa).

At 1–125 (MATLIRSKLS…WNVTNAIQGM (125 aa)) the chain is on the cytoplasmic side. Residues 66-98 (EVPSGDPTAEGDSHYQRDGTGPPSSASKDEGLC) are disordered. A helical membrane pass occupies residues 126–146 (FVLGLPYAILHGGYLGLFLII). The Lumenal, vesicle segment spans residues 147–197 (FAAVVCCYTGKILIACLYEENEDGETVRVRDSYVDIANACCAPRFPKLGGR). A helical transmembrane segment spans residues 198–218 (VVNVAQIIELVMTCILYVVVS). At 219–258 (GNLMYNSFPSLPISQKSWSIIATAMLLPCAFLKNLKAVSK) the chain is on the cytoplasmic side. A helical transmembrane segment spans residues 259-279 (FSLLCTLAHFVINVLVIAYCL). The Lumenal, vesicle segment spans residues 280–298 (SRARDWAWDKVKFYIDVKK). The chain crosses the membrane as a helical span at residues 299 to 319 (FPISIGIIVFSYTSQIFLPSL). Residues 320–334 (EGNMQSPKEFHCMMN) lie on the Cytoplasmic side of the membrane. The helical transmembrane segment at 335–355 (WTHIAACILKGLFALVAYLTW) threads the bilayer. At 356–376 (ADETKEVITDNLPSTIRAVVN) the chain is on the lumenal, vesicle side. A helical transmembrane segment spans residues 377 to 397 (LFLVAKALLSYPLPFFAAVEV). Residues 398–431 (LEKSLFQEGARAFFPNCYGGDGRLKSWGLTLRCA) lie on the Cytoplasmic side of the membrane. A helical transmembrane segment spans residues 432–452 (LVVFTLLMAIYVPHFALLMGL). Topologically, residues 453–454 (TG) are lumenal, vesicle. A helical transmembrane segment spans residues 455–475 (SLTGAGLCFLLPSLFHLKLLW). Topologically, residues 476–482 (RKLQWHQ) are cytoplasmic. The helical transmembrane segment at 483-503 (VFFDVSIFVIGSICSVSGFVH) threads the bilayer. Topologically, residues 504–518 (SLEGLIEAFRFNIED) are lumenal, vesicle.

Belongs to the amino acid/polyamine transporter 2 family.

It localises to the cytoplasmic vesicle membrane. The protein resides in the presynapse. The enzyme catalyses 4-aminobutanoate(out) + n H(+)(in) = 4-aminobutanoate(in) + n H(+)(out). It carries out the reaction glycine(out) + n H(+)(in) = glycine(in) + n H(+)(out). The catalysed reaction is beta-alanine(out) + n H(+)(in) = beta-alanine(in) + n H(+)(out). Functionally, antiporter that exchanges vesicular protons for cytosolic 4-aminobutanoate or to a lesser extend glycine, thus allowing their secretion from nerve terminals. The transport is equally dependent on the chemical and electrical components of the proton gradient. May also transport beta-alanine. Acidification of GABAergic synaptic vesicles is a prerequisite for 4-aminobutanoate uptake. This chain is Vesicular inhibitory amino acid transporter, found in Xenopus tropicalis (Western clawed frog).